The primary structure comprises 481 residues: F-box/FBD/LRR-repeat protein At5g18770 (481 aa).

An F-box domain is found at 23 to 69 (EDMISALPDHLLCHILIFLSTDESVLTSVLSSRWRNLWKWVPRLDLN). LRR repeat units lie at residues 126–153 (KPNV…TLSA), 159–185 (CLKL…YLED), 186–211 (VVFP…KLSL), 214–234 (DDVV…TLKR), 236–261 (VPVY…SLID), 289–314 (DELS…TISW), and 340–368 (ATMS…HFTL). The region spanning 378 to 430 (VITGFSRVLPRCLVFSLESVEMESPITEKATELKLVRYFLENSATLKKLVLLL) is the FBD domain.

The chain is F-box/FBD/LRR-repeat protein At5g18770 from Arabidopsis thaliana (Mouse-ear cress).